The sequence spans 74 residues: Arabinogalactan protein 20 (74 aa).

Positions 1 to 26 (MASRNSVAVIALFAFVFAVISPFAGA) are cleaved as a signal peptide. Q27 is subject to Pyrrolidone carboxylic acid. A 4-hydroxyproline mark is found at P31, P33, and P35. O-linked (Ara...) hydroxyproline glycans are attached at residues P31, P33, and P35. A lipid anchor (GPI-anchor amidated serine) is attached at S37. Residues 38–74 (DGTSIDQGIAYLLMVVALVLTYLIHPLDASSSSYTFF) constitute a propeptide, removed in mature form.

The protein belongs to the AG-peptide AGP family. Post-translationally, contains 4-hydroxyproline; hydroxylated on Pro-31, Pro-33 and Pro-35. In terms of processing, O-glycosylated on hydroxyprolines; noncontiguous hydroxylproline residues are glycosylated with arabinogalactan.

The protein localises to the cell membrane. Functionally, proteoglycan that seems to be implicated in diverse developmental roles such as differentiation, cell-cell recognition, embryogenesis and programmed cell death. This Arabidopsis thaliana (Mouse-ear cress) protein is Arabinogalactan protein 20.